The following is a 340-amino-acid chain: Phosphate acyltransferase (340 aa).

Belongs to the PlsX family. Homodimer. Probably interacts with PlsY.

The protein localises to the cytoplasm. The enzyme catalyses a fatty acyl-[ACP] + phosphate = an acyl phosphate + holo-[ACP]. The protein operates within lipid metabolism; phospholipid metabolism. Its function is as follows. Catalyzes the reversible formation of acyl-phosphate (acyl-PO(4)) from acyl-[acyl-carrier-protein] (acyl-ACP). This enzyme utilizes acyl-ACP as fatty acyl donor, but not acyl-CoA. The polypeptide is Phosphate acyltransferase (Helicobacter pylori (strain HPAG1)).